Reading from the N-terminus, the 61-residue chain is Metallothionein-2 (61 aa).

N-acetylmethionine is present on Met1. The segment at 1 to 29 (MDPNCSCTAGESCTCAGSCKCKDCKCASC) is beta. The a divalent metal cation site is built by Cys5, Cys7, Cys13, Cys15, Cys19, Cys21, Cys24, Cys26, Cys29, Cys33, Cys34, Cys36, Cys37, Cys41, Cys44, Cys48, Cys50, and Cys57. An alpha region spans residues 30–61 (KKSCCSCCPVGCAKCAQGCVCKGASDKCSCCA). Position 58 is a phosphoserine (Ser58). The a divalent metal cation site is built by Cys59 and Cys60.

This sequence belongs to the metallothionein superfamily. Type 1 family. In terms of assembly, interacts with EOLA1.

Metallothioneins have a high content of cysteine residues that bind various heavy metals; these proteins are transcriptionally regulated by both heavy metals and glucocorticoids. The protein is Metallothionein-2 (MT2A) of Ovis aries (Sheep).